The primary structure comprises 245 residues: Probable phosphatase YE2421 (245 aa).

The Zn(2+) site is built by His-7, His-9, His-15, His-40, Glu-73, His-101, His-131, Asp-192, and His-194.

The protein belongs to the PHP family. As to quaternary structure, homotrimer. The cofactor is Zn(2+).

The sequence is that of Probable phosphatase YE2421 from Yersinia enterocolitica serotype O:8 / biotype 1B (strain NCTC 13174 / 8081).